The sequence spans 375 residues: Aminomethyltransferase (375 aa).

It belongs to the GcvT family. The glycine cleavage system is composed of four proteins: P, T, L and H.

The catalysed reaction is N(6)-[(R)-S(8)-aminomethyldihydrolipoyl]-L-lysyl-[protein] + (6S)-5,6,7,8-tetrahydrofolate = N(6)-[(R)-dihydrolipoyl]-L-lysyl-[protein] + (6R)-5,10-methylene-5,6,7,8-tetrahydrofolate + NH4(+). The glycine cleavage system catalyzes the degradation of glycine. This chain is Aminomethyltransferase, found in Cupriavidus necator (strain ATCC 17699 / DSM 428 / KCTC 22496 / NCIMB 10442 / H16 / Stanier 337) (Ralstonia eutropha).